A 925-amino-acid polypeptide reads, in one-letter code: Leucine--tRNA ligase (925 aa).

The 'HIGH' region motif lies at 40 to 51; sequence PYPSGAGLHVGH. Positions 700–704 match the 'KMSKS' region motif; that stretch reads KMSKS. An ATP-binding site is contributed by Lys703.

It belongs to the class-I aminoacyl-tRNA synthetase family.

The protein resides in the cytoplasm. The enzyme catalyses tRNA(Leu) + L-leucine + ATP = L-leucyl-tRNA(Leu) + AMP + diphosphate. This is Leucine--tRNA ligase from Porphyromonas gingivalis (strain ATCC 33277 / DSM 20709 / CIP 103683 / JCM 12257 / NCTC 11834 / 2561).